We begin with the raw amino-acid sequence, 67 residues long: Large ribosomal subunit protein bL35 (67 aa).

The segment covering 1-11 (MPKLKTRKAAA) has biased composition (basic residues). The disordered stretch occupies residues 1–22 (MPKLKTRKAAAKRFEATGSGKK).

The protein belongs to the bacterial ribosomal protein bL35 family.

This chain is Large ribosomal subunit protein bL35, found in Microcystis aeruginosa (strain NIES-843 / IAM M-2473).